A 33-amino-acid polypeptide reads, in one-letter code: Photosystem II reaction center protein Psb30 (33 aa).

The chain crosses the membrane as a helical span at residues 5 to 25 (VIAQLTVLTLMVVSGPLVIVL).

It belongs to the Psb30/Ycf12 family. As to quaternary structure, PSII is composed of 1 copy each of membrane proteins PsbA, PsbB, PsbC, PsbD, PsbE, PsbF, PsbH, PsbI, PsbJ, PsbK, PsbL, PsbM, PsbT, PsbX, PsbY, PsbZ, Psb30/Ycf12, peripheral proteins of the oxygen-evolving complex and a large number of cofactors. It forms dimeric complexes.

It localises to the plastid. Its subcellular location is the chloroplast thylakoid membrane. In terms of biological role, a core subunit of photosystem II (PSII), probably helps stabilize the reaction center. The protein is Photosystem II reaction center protein Psb30 of Pinus koraiensis (Korean pine).